The following is a 229-amino-acid chain: Cytochrome c oxidase subunit 2 (229 aa).

The Mitochondrial intermembrane segment spans residues 1 to 14 (MAQQAQLGLQDAAS). A helical membrane pass occupies residues 15 to 45 (PIMEELIHFHDHTLTVVFLISVLIFYLIIVM). The Mitochondrial matrix segment spans residues 46 to 59 (VTTTFMNKHSLDSQ). A helical transmembrane segment spans residues 60 to 87 (EVEIVWTVMPAIVLITIALPSLRILYLT). Topologically, residues 88–229 (DEISNPHLTI…ENWTTKVLAS (142 aa)) are mitochondrial intermembrane. Cu cation is bound by residues histidine 161, cysteine 196, glutamate 198, cysteine 200, histidine 204, and methionine 207. Glutamate 198 is a binding site for Mg(2+).

This sequence belongs to the cytochrome c oxidase subunit 2 family. As to quaternary structure, component of the cytochrome c oxidase (complex IV, CIV), a multisubunit enzyme composed of 14 subunits. The complex is composed of a catalytic core of 3 subunits MT-CO1, MT-CO2 and MT-CO3, encoded in the mitochondrial DNA, and 11 supernumerary subunits COX4I, COX5A, COX5B, COX6A, COX6B, COX6C, COX7A, COX7B, COX7C, COX8 and NDUFA4, which are encoded in the nuclear genome. The complex exists as a monomer or a dimer and forms supercomplexes (SCs) in the inner mitochondrial membrane with NADH-ubiquinone oxidoreductase (complex I, CI) and ubiquinol-cytochrome c oxidoreductase (cytochrome b-c1 complex, complex III, CIII), resulting in different assemblies (supercomplex SCI(1)III(2)IV(1) and megacomplex MCI(2)III(2)IV(2)). Found in a complex with TMEM177, COA6, COX18, COX20, SCO1 and SCO2. Interacts with TMEM177 in a COX20-dependent manner. Interacts with COX20. Interacts with COX16. It depends on Cu cation as a cofactor.

The protein localises to the mitochondrion inner membrane. It catalyses the reaction 4 Fe(II)-[cytochrome c] + O2 + 8 H(+)(in) = 4 Fe(III)-[cytochrome c] + 2 H2O + 4 H(+)(out). In terms of biological role, component of the cytochrome c oxidase, the last enzyme in the mitochondrial electron transport chain which drives oxidative phosphorylation. The respiratory chain contains 3 multisubunit complexes succinate dehydrogenase (complex II, CII), ubiquinol-cytochrome c oxidoreductase (cytochrome b-c1 complex, complex III, CIII) and cytochrome c oxidase (complex IV, CIV), that cooperate to transfer electrons derived from NADH and succinate to molecular oxygen, creating an electrochemical gradient over the inner membrane that drives transmembrane transport and the ATP synthase. Cytochrome c oxidase is the component of the respiratory chain that catalyzes the reduction of oxygen to water. Electrons originating from reduced cytochrome c in the intermembrane space (IMS) are transferred via the dinuclear copper A center (CU(A)) of subunit 2 and heme A of subunit 1 to the active site in subunit 1, a binuclear center (BNC) formed by heme A3 and copper B (CU(B)). The BNC reduces molecular oxygen to 2 water molecules using 4 electrons from cytochrome c in the IMS and 4 protons from the mitochondrial matrix. The sequence is that of Cytochrome c oxidase subunit 2 (MT-CO2) from Petromyzon marinus (Sea lamprey).